A 346-amino-acid chain; its full sequence is Histone PARylation factor 1 (346 aa).

At Met-1 the chain carries N-acetylmethionine. The segment at 1 to 23 is disordered; sequence MVGGGGKRRPGGEGPQCEKTTDV. The residue at position 19 (Lys-19) is an N6-acetyllysine. Ser-97 carries the ADP-ribosylserine modification. An N6-acetyllysine mark is found at Lys-186 and Lys-233. At Asp-235 the chain carries PolyADP-ribosyl aspartic acid. Residue Tyr-238 is modified to ADP-ribosyltyrosine. Glu-240 is modified (polyADP-ribosyl glutamic acid). Residues 242 to 346 are interaction with PARP1; sequence PETDADLKRI…SQENIDQLAA (105 aa). The active-site Proton donor is the Glu-284.

This sequence belongs to the HPF1 family. Interacts with PARP1 (via the PARP catalytic domain). Interacts with PARP2 (via the PARP catalytic domain). Interacts with core nucleosomes in a PARP1- and PARP2-dependent manner.

It is found in the chromosome. It localises to the nucleus. Cofactor for serine ADP-ribosylation that confers serine specificity on PARP1 and PARP2 and plays a key role in DNA damage response. Initiates the repair of double-strand DNA breaks: recruited to DNA damage sites by PARP1 and PARP2 and switches the amino acid specificity of PARP1 and PARP2 from aspartate or glutamate to serine residues, licensing serine ADP-ribosylation of target proteins. Serine ADP-ribosylation of target proteins, such as histones, promotes decompaction of chromatin and the recruitment of repair factors leading to the reparation of DNA strand breaks. Serine ADP-ribosylation of proteins constitutes the primary form of ADP-ribosylation of proteins in response to DNA damage. HPF1 acts by completing the active site of PARP1 and PARP2: forms a composite active site composed of residues from HPF1 and PARP1 or PARP2. While HPF1 promotes the initiation of serine ADP-ribosylation, it restricts the polymerase activity of PARP1 and PARP2 in order to limit the length of poly-ADP-ribose chains. HPF1 also promotes tyrosine ADP-ribosylation, probably by conferring tyrosine specificity on PARP1. This Homo sapiens (Human) protein is Histone PARylation factor 1.